Consider the following 242-residue polypeptide: N-alpha-acetyltransferase 60 (242 aa).

At 1-192 (MTEVVPSSAL…GGHPPWTILD (192 aa)) the chain is on the cytoplasmic side. The region spanning 13-182 (VSLRLLCHDD…DGFTYVLYIN (170 aa)) is the N-acetyltransferase domain. Residue Tyr38 coordinates substrate. Residue Lys79 is modified to N6-acetyllysine; by autocatalysis. The active site involves Tyr97. Leu99 serves as a coordination point for substrate. 101–103 (LGV) lines the acetyl-CoA pocket. An N6-acetyllysine; by autocatalysis mark is found at Lys105, Lys109, and Lys121. An acetyl-CoA-binding site is contributed by 109-114 (KHGIGS). His138 is a catalytic residue. Acetyl-CoA-binding positions include Asn143 and 150–153 (YENR). The tract at residues 162-173 (PYYYSIRGVLKD) is required for homodimerization. Tyr165 is a substrate binding site. The segment at residues 193–236 (YIQHLGSALANLSPCSIPHRIYRQAHSLLCSFLPWSSISTKGGI) is an intramembrane region (helical). Over 237–242 (EYSRTM) the chain is Cytoplasmic.

Belongs to the acetyltransferase family. NAA60 subfamily. As to quaternary structure, monomer and homodimer; monomer in presence of substrate and homodimer in its absence. Acetylated: autoacetylation is required for optimal acetyltransferase activity.

It is found in the golgi apparatus membrane. It catalyses the reaction N-terminal L-methionyl-[transmembrane protein] + acetyl-CoA = N-terminal N(alpha)-acetyl-L-methionyl-[transmembrane protein] + CoA + H(+). The enzyme catalyses L-lysyl-[protein] + acetyl-CoA = N(6)-acetyl-L-lysyl-[protein] + CoA + H(+). In terms of biological role, N-alpha-acetyltransferase that specifically mediates the acetylation of N-terminal residues of the transmembrane proteins, with a strong preference for N-termini facing the cytosol. Displays N-terminal acetyltransferase activity towards a range of N-terminal sequences including those starting with Met-Lys, Met-Val, Met-Ala and Met-Met. Required for normal chromosomal segregation during anaphase. May also show histone acetyltransferase activity; such results are however unclear in vivo and would require additional experimental evidences. The sequence is that of N-alpha-acetyltransferase 60 (Naa60) from Mus musculus (Mouse).